Here is a 529-residue protein sequence, read N- to C-terminus: UDP-glucuronosyltransferase 2B28 (529 aa).

The first 24 residues, 1-24 (MALKWTSVLLLIHLGCYFSSGSCG), serve as a signal peptide directing secretion. K135 is subject to N6-succinyllysine. A glycan (N-linked (GlcNAc...) asparagine) is linked at N315. A helical membrane pass occupies residues 495–517 (GFLLACVATVIFVVTKFCLFCFW).

Belongs to the UDP-glycosyltransferase family. In terms of tissue distribution, expressed in the liver, breast and kidney.

The protein resides in the endoplasmic reticulum membrane. It localises to the cytoplasm. The protein localises to the perinuclear region. The enzyme catalyses glucuronate acceptor + UDP-alpha-D-glucuronate = acceptor beta-D-glucuronoside + UDP + H(+). Functionally, UDP-glucuronosyltransferase (UGT) that catalyzes phase II biotransformation reactions in which lipophilic substrates are conjugated with glucuronic acid to increase the metabolite's water solubility, thereby facilitating excretion into either the urine or bile. Essential for the elimination and detoxification of drugs, xenobiotics and endogenous compounds. Catalyzes the glucuronidation of endogenous steroid hormones such as androgens (androsterone, 3alpha-androstanediol) and estrogens (estradiol, estrone). Catalyzes the glucuronidation of bile acid substrates, which are natural detergents for dietary lipids absorption. Displays glucuronidation activity toward the phenolic compounds eugenol. Lack UDP-glucuronosyltransferase (UGT) activity. The chain is UDP-glucuronosyltransferase 2B28 from Homo sapiens (Human).